A 455-amino-acid polypeptide reads, in one-letter code: Bifunctional protein GlmU (455 aa).

Residues 1–230 (MTKRNAIILA…FDESMGVNDR (230 aa)) are pyrophosphorylase. UDP-N-acetyl-alpha-D-glucosamine is bound by residues 9 to 12 (LAAG), Lys23, Gln73, 78 to 79 (GT), 101 to 103 (SGD), Gly140, Glu155, Asn170, and Asn228. A Mg(2+)-binding site is contributed by Asp103. Asn228 is a binding site for Mg(2+). Residues 231 to 251 (VALARANKVMRNRINTHWMRE) are linker. The segment at 252–455 (GVSMIDPETT…KENYAKKLPW (204 aa)) is N-acetyltransferase. Residues Arg333 and Lys351 each coordinate UDP-N-acetyl-alpha-D-glucosamine. Residue His363 is the Proton acceptor of the active site. Positions 366 and 377 each coordinate UDP-N-acetyl-alpha-D-glucosamine. Acetyl-CoA is bound by residues 386–387 (NY), Ser405, Ala423, and Arg440.

The protein in the N-terminal section; belongs to the N-acetylglucosamine-1-phosphate uridyltransferase family. This sequence in the C-terminal section; belongs to the transferase hexapeptide repeat family. Homotrimer. It depends on Mg(2+) as a cofactor.

It is found in the cytoplasm. It carries out the reaction alpha-D-glucosamine 1-phosphate + acetyl-CoA = N-acetyl-alpha-D-glucosamine 1-phosphate + CoA + H(+). The enzyme catalyses N-acetyl-alpha-D-glucosamine 1-phosphate + UTP + H(+) = UDP-N-acetyl-alpha-D-glucosamine + diphosphate. It participates in nucleotide-sugar biosynthesis; UDP-N-acetyl-alpha-D-glucosamine biosynthesis; N-acetyl-alpha-D-glucosamine 1-phosphate from alpha-D-glucosamine 6-phosphate (route II): step 2/2. The protein operates within nucleotide-sugar biosynthesis; UDP-N-acetyl-alpha-D-glucosamine biosynthesis; UDP-N-acetyl-alpha-D-glucosamine from N-acetyl-alpha-D-glucosamine 1-phosphate: step 1/1. Its pathway is bacterial outer membrane biogenesis; LPS lipid A biosynthesis. Its function is as follows. Catalyzes the last two sequential reactions in the de novo biosynthetic pathway for UDP-N-acetylglucosamine (UDP-GlcNAc). The C-terminal domain catalyzes the transfer of acetyl group from acetyl coenzyme A to glucosamine-1-phosphate (GlcN-1-P) to produce N-acetylglucosamine-1-phosphate (GlcNAc-1-P), which is converted into UDP-GlcNAc by the transfer of uridine 5-monophosphate (from uridine 5-triphosphate), a reaction catalyzed by the N-terminal domain. The polypeptide is Bifunctional protein GlmU (Limosilactobacillus reuteri (strain DSM 20016) (Lactobacillus reuteri)).